Here is a 385-residue protein sequence, read N- to C-terminus: NifS/IcsS protein homolog (385 aa).

Pyridoxal 5'-phosphate-binding positions include 69–70 (GT), asparagine 149, glutamine 178, and 199–201 (SSH). At lysine 202 the chain carries N6-(pyridoxal phosphate)lysine. Threonine 237 is a pyridoxal 5'-phosphate binding site. Cysteine 325 functions as the Cysteine persulfide intermediate in the catalytic mechanism. Residue cysteine 325 participates in [2Fe-2S] cluster binding.

This sequence belongs to the class-V pyridoxal-phosphate-dependent aminotransferase family. NifS/IscS subfamily. It depends on pyridoxal 5'-phosphate as a cofactor.

The polypeptide is NifS/IcsS protein homolog (Lactobacillus delbrueckii subsp. bulgaricus (strain ATCC 11842 / DSM 20081 / BCRC 10696 / JCM 1002 / NBRC 13953 / NCIMB 11778 / NCTC 12712 / WDCM 00102 / Lb 14)).